Here is a 254-residue protein sequence, read N- to C-terminus: MSMQSNSSDASSATVDPAEIAKFSRLSAQWWDPTGKMAPLHKINPLRLSFIRDAACRKFERNAKSLNCLSGLRMIDIGCGAGLLCEPFTRLGAQVIGVDPSATNIAAAKLHAEKSQLLIDYRCTTVEQMDPRERFDIVLAMEVIEHVTDVGAFLARCAAITKPGGLMVVATLNRNWKSFALAIVGAEYVMRWLPRGTHQWDKFVTPDELTKHLHNNKLAVTEQAGLVYNPLADKWSLSADMDVNYMVVAETAAG.

Residues Arg-47, Gly-78, Asp-99, and Met-141 each contribute to the S-adenosyl-L-methionine site.

This sequence belongs to the methyltransferase superfamily. UbiG/COQ3 family.

It catalyses the reaction a 3-demethylubiquinol + S-adenosyl-L-methionine = a ubiquinol + S-adenosyl-L-homocysteine + H(+). It carries out the reaction a 3-(all-trans-polyprenyl)benzene-1,2-diol + S-adenosyl-L-methionine = a 2-methoxy-6-(all-trans-polyprenyl)phenol + S-adenosyl-L-homocysteine + H(+). Its pathway is cofactor biosynthesis; ubiquinone biosynthesis. Its function is as follows. O-methyltransferase that catalyzes the 2 O-methylation steps in the ubiquinone biosynthetic pathway. This is Ubiquinone biosynthesis O-methyltransferase from Rhodopseudomonas palustris (strain BisB18).